The following is a 141-amino-acid chain: Nucleoside diphosphate kinase (141 aa).

Residues Lys-11, Phe-59, Arg-87, Thr-93, Arg-104, and Asn-114 each coordinate ATP. Residue His-117 is the Pros-phosphohistidine intermediate of the active site.

The protein belongs to the NDK family. Homotetramer. Requires Mg(2+) as cofactor.

It is found in the cytoplasm. It carries out the reaction a 2'-deoxyribonucleoside 5'-diphosphate + ATP = a 2'-deoxyribonucleoside 5'-triphosphate + ADP. The catalysed reaction is a ribonucleoside 5'-diphosphate + ATP = a ribonucleoside 5'-triphosphate + ADP. Major role in the synthesis of nucleoside triphosphates other than ATP. The ATP gamma phosphate is transferred to the NDP beta phosphate via a ping-pong mechanism, using a phosphorylated active-site intermediate. The polypeptide is Nucleoside diphosphate kinase (Halorhodospira halophila (strain DSM 244 / SL1) (Ectothiorhodospira halophila (strain DSM 244 / SL1))).